Reading from the N-terminus, the 301-residue chain is MNQIEKTGELTSSRFTVRDFTELVKIGIVNSNTITAFTGMWLAFQLNGISFIQNVDVIFFTIVGSALIVAASGAFNNVIDRDIDGIMERTKNRPTMTGKISGKRALMVALVLGVVGTIMLFMTTWQAGVLGVIGVFLYVVVYSLYAKRKLVSNTVIGSFSGAVPPLIGWFAVEPSFSIVPIMLFLVMFCWQPPHFYAIAIKRKEEYAAAGIPMLPVVKGIERTKKSMFFWVILLTVLPFFMFDLGLVYVILATLLNIGWLALSIYGFKMDDSIKWAKWMFVYSLNYMTILFVAMVVISIFL.

9 consecutive transmembrane segments (helical) span residues 20–42 (FTEL…GMWL), 55–75 (VDVI…SGAF), 105–125 (ALMV…MTTW), 126–146 (QAGV…SLYA), 150–172 (LVSN…WFAV), 176–198 (FSIV…FYAI), 227–247 (MFFW…LGLV), 249–269 (VILA…GFKM), and 280–300 (FVYS…ISIF).

The protein belongs to the UbiA prenyltransferase family. Protoheme IX farnesyltransferase subfamily. In terms of assembly, interacts with CtaA.

Its subcellular location is the cell membrane. It carries out the reaction heme b + (2E,6E)-farnesyl diphosphate + H2O = Fe(II)-heme o + diphosphate. The protein operates within porphyrin-containing compound metabolism; heme O biosynthesis; heme O from protoheme: step 1/1. Converts heme B (protoheme IX) to heme O by substitution of the vinyl group on carbon 2 of heme B porphyrin ring with a hydroxyethyl farnesyl side group. This is Protoheme IX farnesyltransferase from Listeria innocua serovar 6a (strain ATCC BAA-680 / CLIP 11262).